The chain runs to 183 residues: MSGKIQHKAVVPAPSRIPLTLSEIEDLRRKGFNQTEIAELYGVTRQAVSWHKKTYGGRLTTRQIVQQNWPWDTRKPHDKSKAFQRLRDHGEYMRVGSFRTMSEDKKKRLLSWWKMLRDDDLVLEFDPSIEPYEGMAGGGFRYVPRGIEDDDLLIRVNEHTNLTAEGELLWSWPDDIEELLSEP.

Residues 34–53 (QTEIAELYGVTRQAVSWHKK) constitute a DNA-binding region (H-T-H motif).

Confers immunity to L5 superinfection, required for maintenance of the lysogenic state. Binds to multiple asymmetric DNA sites. Regulates transcription initiation at an early lytic promoter, Pleft, but also affects downstream gene expression at 'stoperator' sites in the phage genome. This chain is Repressor-like immunity protein (71), found in Mycobacterium phage L5 (Mycobacteriophage L5).